Here is a 508-residue protein sequence, read N- to C-terminus: Aspartic proteinase yapsin-3 (508 aa).

Residues 1–20 (MKLQLAAVATLAVLTSPAFG) form the signal peptide. Positions 21-47 (RVLPDGKYVKIPFTKKKNGDNGELSKR) are excised as a propeptide. In terms of domain architecture, Peptidase A1 spans 63–394 (YSVELAIGTP…DLDNYEISLA (332 aa)). The N-linked (GlcNAc...) asparagine glycan is linked to Asn75. Asp81 is an active-site residue. N-linked (GlcNAc...) asparagine glycans are attached at residues Asn120, Asn160, Asn163, and Asn275. Residue Asp288 is part of the active site. 6 N-linked (GlcNAc...) asparagine glycosylation sites follow: Asn309, Asn328, Asn367, Asn422, Asn445, and Asn462. A compositionally biased stretch (low complexity) spans 448 to 468 (STATTTRSTTTKKTNSTTTAK). The segment at 448–476 (STATTTRSTTTKKTNSTTTAKSTHKSKRA) is disordered. The GPI-anchor amidated asparagine moiety is linked to residue Asn483. Positions 484–508 (SASSIRSTLGLLLVPSLLILSVFFS) are cleaved as a propeptide — removed in mature form.

It belongs to the peptidase A1 family. In terms of processing, can also be processed to start at Phe-54.

The protein localises to the cell membrane. Cleaves proteins C-terminally to mono- and paired-basic residues. Required for cell wall integrity. The chain is Aspartic proteinase yapsin-3 (YPS3) from Saccharomyces cerevisiae (strain ATCC 204508 / S288c) (Baker's yeast).